The primary structure comprises 150 residues: Deoxyuridine 5'-triphosphate nucleotidohydrolase (150 aa).

Residues 69–71, N82, and 86–88 each bind substrate; these read RSG and LID.

It belongs to the dUTPase family. Mg(2+) serves as cofactor.

The catalysed reaction is dUTP + H2O = dUMP + diphosphate + H(+). It participates in pyrimidine metabolism; dUMP biosynthesis; dUMP from dCTP (dUTP route): step 2/2. Functionally, this enzyme is involved in nucleotide metabolism: it produces dUMP, the immediate precursor of thymidine nucleotides and it decreases the intracellular concentration of dUTP so that uracil cannot be incorporated into DNA. The polypeptide is Deoxyuridine 5'-triphosphate nucleotidohydrolase (Methylobacillus flagellatus (strain ATCC 51484 / DSM 6875 / VKM B-1610 / KT)).